A 585-amino-acid chain; its full sequence is METHRRSSTNSIRSHKPARPIALEDDSTKASDALPLPLYLTNAVFFTLFFSAVYFLLCRWREKIRSSTPLHVVTFSEIVAILASVASFIYLLGFFGIDFVQSLVLRPSADVWATEDDEVESEVLLRNEDARHVPCGQALDRSIRSLQPPEPIVTAEKVFDEMPVTVMTEEDEEIIRSVVCGMTPSYSLESKLDDCKRAAAIRREALQRITGKSLSGLPLDGFDYESILGQCCEMPVGYEQIPVGIAGPLLLNGREYSVPMATTEGCLVASTNRGCKAIHLSGGATSVLLRDGMTRAPVVRFGTAKRAADLKLYLEDPENFETLACVFNRSSRFARLQSIKCAIAGKNLYLRFSCFTGDAMGMNMVSKGVQNVLDFLQTDFPDMDVIGISGNFCSDKKPAAVNWIEGRGKSVVCEAIINGDVVTKVLKTSVESLVELNMLKNLTGSAMAGALGGFNAHASNIVTAVYIATGQDPAQNVESSHCITMMEAVNGGKDLHVSVTMPSIEVGTVGGGTQLASQSACLNLLGVKGASKESPGANSILLATIVAGAVLAGELSLMSALAAGQLVKSHMKYNRSSKDVSKVSS.

The next 2 helical transmembrane spans lie at 38-58 and 77-97; these read LYLT…FLLC and EIVA…FFGI. Residues 98-169 form a linker region; sequence DFVQSLVLRP…DEMPVTVMTE (72 aa). The interval 170 to 585 is catalytic; the sequence is EDEEIIRSVV…SSKDVSKVSS (416 aa). The active-site Charge relay system is the E264. Residue N328 is glycosylated (N-linked (GlcNAc...) asparagine). The active-site Charge relay system is the K396. N441 carries an N-linked (GlcNAc...) asparagine glycan. D472 (charge relay system) is an active-site residue. The active-site Proton donor is the H570. The N-linked (GlcNAc...) asparagine glycan is linked to N574.

It belongs to the HMG-CoA reductase family.

It is found in the endoplasmic reticulum membrane. Its subcellular location is the mitochondrion membrane. The protein resides in the plastid membrane. It catalyses the reaction (R)-mevalonate + 2 NADP(+) + CoA = (3S)-3-hydroxy-3-methylglutaryl-CoA + 2 NADPH + 2 H(+). It functions in the pathway metabolic intermediate biosynthesis; (R)-mevalonate biosynthesis; (R)-mevalonate from acetyl-CoA: step 3/3. In terms of biological role, catalyzes the synthesis of mevalonate. The specific precursor of all isoprenoid compounds present in plants. In Gossypium hirsutum (Upland cotton), this protein is 3-hydroxy-3-methylglutaryl-coenzyme A reductase 1 (HMG1).